A 78-amino-acid chain; its full sequence is Beta-defensin 105A (78 aa).

The signal sequence occupies residues methionine 1–alanine 27. 3 disulfide bridges follow: cysteine 43/cysteine 74, cysteine 53/cysteine 67, and cysteine 57/cysteine 73.

Belongs to the beta-defensin family.

It is found in the secreted. In terms of biological role, has antimicrobial activity. This chain is Beta-defensin 105A (DEFB105A), found in Pongo pygmaeus (Bornean orangutan).